Reading from the N-terminus, the 764-residue chain is Protein FAR1-RELATED SEQUENCE 7 (764 aa).

The FAR1 1 domain maps to 42–118; the sequence is DYYNSYATRT…QKEHNHDLGG (77 aa). Positions 119–144 are disordered; it reads HIEEAQTTPRPSVQQRAPAPTKLGIS. Residues 123 to 133 show a composition bias toward polar residues; the sequence is AQTTPRPSVQQ. Residues 204-280 enclose the FAR1 2 domain; it reads QFYQAYAEVV…NKDHNHDLEP (77 aa). Residues 375–471 form the MULE domain; it reads AVVFDTSYRK…SAWQIRSKER (97 aa). Residues 650–686 form an SWIM-type zinc finger; it reads HAVTFSASNLNASCSCQMFEYEGLLCRHILKVFNLLD.

This sequence belongs to the FHY3/FAR1 family. In terms of tissue distribution, expressed in hypocotyls, rosette and cauline leaves, inflorescences stems, flowers and siliques.

The protein resides in the nucleus. Functionally, putative transcription activator involved in regulating light control of development. The polypeptide is Protein FAR1-RELATED SEQUENCE 7 (FRS7) (Arabidopsis thaliana (Mouse-ear cress)).